Consider the following 112-residue polypeptide: Gonad-inhibiting hormone (112 aa).

An N-terminal signal peptide occupies residues 1-31 (MVTRVGSGFSVQRVWLLLVIVVVLCGSVTQQ). 3 disulfide bridges follow: Cys41-Cys78, Cys58-Cys74, and Cys61-Cys87. Ala109 carries the alanine amide modification.

As to expression, produced in the eyestalk X-organ sinus gland complex of male and female lobsters.

It is found in the secreted. Inhibits vitellogenesis in female animals. Plays a prominent role in the regulation of reproduction/molting processes. This chain is Gonad-inhibiting hormone, found in Homarus americanus (American lobster).